We begin with the raw amino-acid sequence, 469 residues long: ATP sulfurylase 4, chloroplastic (469 aa).

A chloroplast-targeting transit peptide spans 1–51 (MASSAAAIVSGSPFRSSPLIHNHHASRYAPGSISVVSLPRQVSRRGLSVKS).

Belongs to the sulfate adenylyltransferase family. Homotetramer. As to expression, expressed in roots and leaves.

It localises to the plastid. The protein resides in the chloroplast stroma. It catalyses the reaction sulfate + ATP + H(+) = adenosine 5'-phosphosulfate + diphosphate. The protein operates within sulfur metabolism; hydrogen sulfide biosynthesis; sulfite from sulfate: step 1/3. Its function is as follows. Sulfate adenylyltransferase. Catalyzes the first step of the sulfate assimilation pathway. The sequence is that of ATP sulfurylase 4, chloroplastic (APS4) from Arabidopsis thaliana (Mouse-ear cress).